Consider the following 602-residue polypeptide: Aspartate--tRNA(Asp/Asn) ligase (602 aa).

An L-aspartate-binding site is contributed by Glu191. Residues 215–218 (QLYK) are aspartate. Arg237 is an L-aspartate binding site. ATP contacts are provided by residues 237 to 239 (RDE) and Gln246. His465 serves as a coordination point for L-aspartate. Glu499 is a binding site for ATP. Residue Arg506 participates in L-aspartate binding. 551-554 (GLDR) serves as a coordination point for ATP.

The protein belongs to the class-II aminoacyl-tRNA synthetase family. Type 1 subfamily. In terms of assembly, homodimer.

The protein resides in the cytoplasm. It catalyses the reaction tRNA(Asx) + L-aspartate + ATP = L-aspartyl-tRNA(Asx) + AMP + diphosphate. Aspartyl-tRNA synthetase with relaxed tRNA specificity since it is able to aspartylate not only its cognate tRNA(Asp) but also tRNA(Asn). Reaction proceeds in two steps: L-aspartate is first activated by ATP to form Asp-AMP and then transferred to the acceptor end of tRNA(Asp/Asn). This Treponema pallidum (strain Nichols) protein is Aspartate--tRNA(Asp/Asn) ligase.